Here is a 587-residue protein sequence, read N- to C-terminus: MPSYMAFTPYIMFSTNYAAIAYILISRCYRDSMLLDLQRITLEVNREMLRTGKKMNSLIRRMFFLKTFTLTYSCLSYILAVLVYQWRAQNWSNLFNGLLVNISLTILVVTTFFYFVSLMHVARGFDFVNQQLEDIVSSQSMDLKKKAHELRSLWALHSNLSNTARRINKHYGPQMLALRFDYFIFSVINCCIGTIYSNSDQESSFEKFFGSLLYWARSVDFFLNDYICNLVTEYQSQPKFFAPEGSMTNELSSYLIYESSTRLDLLVCGLYPVNKAKWLEMVASIVVHSIMLFQFHLVMRGGYTTLFSRTYALLANIITLTMLPIVMWQVRSVFLAKRHYPQLILITNDIRYTVSFLIILYTLLSRGFRDTALKEMQPLLLTLFREEKRCGYKGIDGVRRSLRILLFVKFFTLSWLCITDIIFLFYSSDAVIWVNIARFLFLSNTNNILEMVPMGYFLALWHIARGFDCVNRRLDQIVKSKSTRDQKELQHLWFLHTCLTKTALNINKIYAPQMLATRFDHFVIGVIQAYWGAVFTFDLSTSFLWVVYGSVQYHVRSLDYYLIDYMCDVAVEYHDSARHSWSEKECY.

At 1–4 (MPSY) the chain is on the cytoplasmic side. A helical membrane pass occupies residues 5 to 25 (MAFTPYIMFSTNYAAIAYILI). Topologically, residues 26–62 (SRCYRDSMLLDLQRITLEVNREMLRTGKKMNSLIRRM) are extracellular. Residues 63-83 (FFLKTFTLTYSCLSYILAVLV) form a helical membrane-spanning segment. The Cytoplasmic segment spans residues 84 to 97 (YQWRAQNWSNLFNG). The helical transmembrane segment at 98–118 (LLVNISLTILVVTTFFYFVSL) threads the bilayer. Topologically, residues 119–277 (MHVARGFDFV…CGLYPVNKAK (159 aa)) are extracellular. An N-linked (GlcNAc...) asparagine glycan is attached at Asn-159. The chain crosses the membrane as a helical span at residues 278-298 (WLEMVASIVVHSIMLFQFHLV). Residues 299–309 (MRGGYTTLFSR) are Cytoplasmic-facing. Residues 310-330 (TYALLANIITLTMLPIVMWQV) traverse the membrane as a helical segment. Residues 331–403 (RSVFLAKRHY…GIDGVRRSLR (73 aa)) lie on the Extracellular side of the membrane. A helical membrane pass occupies residues 404-424 (ILLFVKFFTLSWLCITDIIFL). Over 425-518 (FYSSDAVIWV…IYAPQMLATR (94 aa)) the chain is Cytoplasmic. A helical membrane pass occupies residues 519–539 (FDHFVIGVIQAYWGAVFTFDL). Topologically, residues 540–587 (STSFLWVVYGSVQYHVRSLDYYLIDYMCDVAVEYHDSARHSWSEKECY) are extracellular.

It belongs to the insect chemoreceptor superfamily. Gustatory receptor (GR) family. Gr22e subfamily.

Its subcellular location is the cell membrane. Its function is as follows. Probable gustatory receptor which mediates acceptance or avoidance behavior, depending on its substrates. The protein is Putative gustatory receptor 59b of Drosophila erecta (Fruit fly).